Reading from the N-terminus, the 501-residue chain is Probable cysteine desulfurase, mitochondrial (501 aa).

Residues 172-173 (AT), N252, Q280, and 300-302 (SAH) each bind pyridoxal 5'-phosphate. Residue K303 is modified to N6-(pyridoxal phosphate)lysine. T340 lines the pyridoxal 5'-phosphate pocket. C425 serves as the catalytic Cysteine persulfide intermediate. C425 contributes to the [2Fe-2S] cluster binding site.

This sequence belongs to the class-V pyridoxal-phosphate-dependent aminotransferase family. NifS/IscS subfamily. Requires pyridoxal 5'-phosphate as cofactor.

The protein resides in the mitochondrion. The catalysed reaction is (sulfur carrier)-H + L-cysteine = (sulfur carrier)-SH + L-alanine. In terms of biological role, catalyzes the removal of elemental sulfur from cysteine to produce alanine. It supplies the inorganic sulfur for iron-sulfur (Fe-S) clusters. Plays a role in both tRNA-processing and mitochondrial metabolism. Involved in the 2-thio-modification of both 5-carboxymethylaminomethyl-2-thiouridine in mitochondrial tRNAs and 5-methoxycarbonylmethyl-2-thiouridine (mcm5s2U) in cytoplasmic tRNAs. This is Probable cysteine desulfurase, mitochondrial from Schizosaccharomyces pombe (strain 972 / ATCC 24843) (Fission yeast).